The chain runs to 229 residues: Molybdenum transport system permease protein ModB (229 aa).

At 1–16 (MILTDPEWQAVLLSLK) the chain is on the periplasmic side. One can recognise an ABC transmembrane type-1 domain in the interval 11 to 219 (VLLSLKVSSL…MISLLISEWL (209 aa)). The helical transmembrane segment at 17-37 (VSSLAVLFSLPFGIFFAWLLV) threads the bilayer. The Cytoplasmic segment spans residues 38–49 (RCTFPGKALLDS). A helical membrane pass occupies residues 50-70 (VLHLPLVLPPVVVGYLLLVSM). Residues 71–83 (GRRGFIGERLYDW) are Periplasmic-facing. Residues 84 to 104 (FGITFAFSWRGAVLAAAVMSF) traverse the membrane as a helical segment. At 105–136 (PLMVRAIRLALEGVDVKLEQAARTLGAGRWRV) the chain is on the cytoplasmic side. A helical transmembrane segment spans residues 137 to 157 (FFTITLPLTLPGIIVGTVLAF). Over 158–201 (ARSLGEFGATITFVSNIPGETRTIPSAMYTLIQTPGGESGAARL) the chain is Periplasmic. The helical transmembrane segment at 202-222 (CIISIALAMISLLISEWLARI) threads the bilayer. At 223-229 (SRERAGR) the chain is on the cytoplasmic side.

It belongs to the binding-protein-dependent transport system permease family. CysTW subfamily.

The protein localises to the cell inner membrane. Its function is as follows. Part of the binding-protein-dependent transport system for molybdenum; probably responsible for the translocation of the substrate across the membrane. This chain is Molybdenum transport system permease protein ModB (modB), found in Escherichia coli O157:H7.